The primary structure comprises 116 residues: Photosystem II reaction center Psb28 protein (116 aa).

Belongs to the Psb28 family. As to quaternary structure, part of the photosystem II complex.

Its subcellular location is the plastid. It is found in the chloroplast thylakoid membrane. The chain is Photosystem II reaction center Psb28 protein from Guillardia theta (Cryptophyte).